The chain runs to 541 residues: Chaperonin GroEL 1 (541 aa).

ATP is bound by residues 29 to 32, 86 to 90, Gly415, 479 to 481, and Asp495; these read TIGP, DGTTT, and NAA.

The protein belongs to the chaperonin (HSP60) family. Forms a cylinder of 14 subunits composed of two heptameric rings stacked back-to-back. Interacts with the co-chaperonin GroES.

It is found in the cytoplasm. It carries out the reaction ATP + H2O + a folded polypeptide = ADP + phosphate + an unfolded polypeptide.. Functionally, together with its co-chaperonin GroES, plays an essential role in assisting protein folding. The GroEL-GroES system forms a nano-cage that allows encapsulation of the non-native substrate proteins and provides a physical environment optimized to promote and accelerate protein folding. This chain is Chaperonin GroEL 1, found in Streptomyces coelicolor (strain ATCC BAA-471 / A3(2) / M145).